Reading from the N-terminus, the 276-residue chain is Shikimate dehydrogenase (NADP(+)) (276 aa).

Shikimate is bound by residues Ser-14–Ser-16 and Thr-61. Lys-65 functions as the Proton acceptor in the catalytic mechanism. Asp-77 contributes to the NADP(+) binding site. The shikimate site is built by Asn-86 and Asp-102. NADP(+) is bound by residues Gly-127–Ala-131, Asn-151–Lys-156, and Met-214. Tyr-216 provides a ligand contact to shikimate. Residue Gly-238 participates in NADP(+) binding.

The protein belongs to the shikimate dehydrogenase family. Homodimer.

It catalyses the reaction shikimate + NADP(+) = 3-dehydroshikimate + NADPH + H(+). It functions in the pathway metabolic intermediate biosynthesis; chorismate biosynthesis; chorismate from D-erythrose 4-phosphate and phosphoenolpyruvate: step 4/7. Functionally, involved in the biosynthesis of the chorismate, which leads to the biosynthesis of aromatic amino acids. Catalyzes the reversible NADPH linked reduction of 3-dehydroshikimate (DHSA) to yield shikimate (SA). The sequence is that of Shikimate dehydrogenase (NADP(+)) from Nitrosomonas europaea (strain ATCC 19718 / CIP 103999 / KCTC 2705 / NBRC 14298).